Here is a 232-residue protein sequence, read N- to C-terminus: Somatolactin (232 aa).

The N-terminal stretch at 1–16 (MHNWKGVWLCSLFLTF) is a signal peptide. 3 disulfide bridges follow: Cys31–Cys41, Cys91–Cys206, and Cys223–Cys231. The N-linked (GlcNAc...) asparagine glycan is linked to Asn147.

Belongs to the somatotropin/prolactin family. Pituitary gland.

It is found in the secreted. The protein is Somatolactin of Protopterus annectens (African lungfish).